Reading from the N-terminus, the 86-residue chain is Protein IDA-LIKE 1 (86 aa).

The N-terminal stretch at 1–27 (MNLSHKTMFMTLYIVFLLIFGSYNATA) is a signal peptide.

Expressed in roots.

Its subcellular location is the secreted. The protein resides in the extracellular space. Functionally, involved in an ethylene-independent separation step of floral abscission. May act with RLK5 and HSL2 as ligand-receptor pairs. In Arabidopsis thaliana (Mouse-ear cress), this protein is Protein IDA-LIKE 1 (IDL1).